A 426-amino-acid polypeptide reads, in one-letter code: Glutamyl-tRNA reductase (426 aa).

Substrate contacts are provided by residues 49–52 (TCNR), S109, 114–116 (EGQ), and Q120. The active-site Nucleophile is C50. 189 to 194 (GAGETG) contacts NADP(+).

It belongs to the glutamyl-tRNA reductase family. Homodimer.

The catalysed reaction is (S)-4-amino-5-oxopentanoate + tRNA(Glu) + NADP(+) = L-glutamyl-tRNA(Glu) + NADPH + H(+). It functions in the pathway porphyrin-containing compound metabolism; protoporphyrin-IX biosynthesis; 5-aminolevulinate from L-glutamyl-tRNA(Glu): step 1/2. The protein operates within porphyrin-containing compound metabolism; chlorophyll biosynthesis. Its function is as follows. Catalyzes the NADPH-dependent reduction of glutamyl-tRNA(Glu) to glutamate 1-semialdehyde (GSA). The protein is Glutamyl-tRNA reductase of Prosthecochloris aestuarii (strain DSM 271 / SK 413).